A 96-amino-acid polypeptide reads, in one-letter code: Co-chaperonin GroES (96 aa).

It belongs to the GroES chaperonin family. Heptamer of 7 subunits arranged in a ring. Interacts with the chaperonin GroEL.

It localises to the cytoplasm. Its function is as follows. Together with the chaperonin GroEL, plays an essential role in assisting protein folding. The GroEL-GroES system forms a nano-cage that allows encapsulation of the non-native substrate proteins and provides a physical environment optimized to promote and accelerate protein folding. GroES binds to the apical surface of the GroEL ring, thereby capping the opening of the GroEL channel. In Shewanella halifaxensis (strain HAW-EB4), this protein is Co-chaperonin GroES.